The sequence spans 154 residues: Xanthine-guanine phosphoribosyltransferase (154 aa).

5-phospho-alpha-D-ribose 1-diphosphate is bound by residues 37–38, arginine 69, and 88–96; these read RG and EDLVDSGDT. Arginine 69 contributes to the GMP binding site. Aspartate 89 lines the Mg(2+) pocket. 2 residues coordinate guanine: aspartate 92 and isoleucine 135. The xanthine site is built by aspartate 92 and isoleucine 135. GMP contacts are provided by residues 92-96 and 134-135; these read DSGDT and WI.

This sequence belongs to the purine/pyrimidine phosphoribosyltransferase family. XGPT subfamily. Homotetramer. Mg(2+) is required as a cofactor.

Its subcellular location is the cell inner membrane. The catalysed reaction is GMP + diphosphate = guanine + 5-phospho-alpha-D-ribose 1-diphosphate. It carries out the reaction XMP + diphosphate = xanthine + 5-phospho-alpha-D-ribose 1-diphosphate. It catalyses the reaction IMP + diphosphate = hypoxanthine + 5-phospho-alpha-D-ribose 1-diphosphate. The protein operates within purine metabolism; GMP biosynthesis via salvage pathway; GMP from guanine: step 1/1. It participates in purine metabolism; XMP biosynthesis via salvage pathway; XMP from xanthine: step 1/1. Its function is as follows. Purine salvage pathway enzyme that catalyzes the transfer of the ribosyl-5-phosphate group from 5-phospho-alpha-D-ribose 1-diphosphate (PRPP) to the N9 position of the 6-oxopurines guanine and xanthine to form the corresponding ribonucleotides GMP (guanosine 5'-monophosphate) and XMP (xanthosine 5'-monophosphate), with the release of PPi. To a lesser extent, also acts on hypoxanthine. This chain is Xanthine-guanine phosphoribosyltransferase, found in Vibrio campbellii (strain ATCC BAA-1116).